A 435-amino-acid chain; its full sequence is 3-ketoacyl-CoA thiolase (435 aa).

Cysteine 98 functions as the Acyl-thioester intermediate in the catalytic mechanism. Catalysis depends on proton acceptor residues histidine 391 and cysteine 421.

This sequence belongs to the thiolase-like superfamily. Thiolase family. As to quaternary structure, heterotetramer of two alpha chains (FadJ) and two beta chains (FadI).

It localises to the cytoplasm. The enzyme catalyses an acyl-CoA + acetyl-CoA = a 3-oxoacyl-CoA + CoA. It participates in lipid metabolism; fatty acid beta-oxidation. Its function is as follows. Catalyzes the final step of fatty acid oxidation in which acetyl-CoA is released and the CoA ester of a fatty acid two carbons shorter is formed. This is 3-ketoacyl-CoA thiolase from Vibrio cholerae serotype O1 (strain ATCC 39315 / El Tor Inaba N16961).